Reading from the N-terminus, the 21-residue chain is Dahlein-5.2 (21 aa).

As to expression, expressed by the skin dorsal glands.

The protein localises to the secreted. In terms of biological role, has no antimicrobial activity. Strongly inhibits the formation of NO by neuronal nitric oxide synthase at micromolar concentrations. The polypeptide is Dahlein-5.2 (Ranoidea dahlii (Dahl's aquatic frog)).